A 621-amino-acid polypeptide reads, in one-letter code: 2-hydroxyacyl-CoA lyase 2 (621 aa).

The helical transmembrane segment at 7-29 threads the bilayer; it reads LGCSLGAALGGVIFASYKLGLLY. Glutamate 87 contributes to the thiamine diphosphate binding site. The interval 459-539 is thiamine pyrophosphate binding; sequence DFVGSAAYIM…VIALVGNDAC (81 aa). Positions 510 and 536 each coordinate Mg(2+).

It belongs to the TPP enzyme family. Requires Mg(2+) as cofactor. The cofactor is thiamine diphosphate.

The protein localises to the endoplasmic reticulum membrane. The catalysed reaction is 2-hydroxyoctadecanoyl-CoA = heptadecanal + formyl-CoA. It catalyses the reaction (2R)-hydroxyhexadecanoyl-CoA = pentadecanal + formyl-CoA. Endoplasmic reticulum 2-OH acyl-CoA lyase involved in the cleavage (C1 removal) reaction in the fatty acid alpha-oxydation in a thiamine pyrophosphate (TPP)-dependent manner. This is 2-hydroxyacyl-CoA lyase 2 (ilvbl) from Danio rerio (Zebrafish).